The sequence spans 341 residues: L-threonine 3-dehydrogenase (341 aa).

C38 is a binding site for Zn(2+). Catalysis depends on charge relay system residues T40 and H43. Zn(2+) contacts are provided by H63, E64, C93, C96, C99, and C107. Residues I175, D195, R200, 262 to 264 (LGI), and 286 to 287 (IY) each bind NAD(+).

This sequence belongs to the zinc-containing alcohol dehydrogenase family. Homotetramer. The cofactor is Zn(2+).

It localises to the cytoplasm. It catalyses the reaction L-threonine + NAD(+) = (2S)-2-amino-3-oxobutanoate + NADH + H(+). It participates in amino-acid degradation; L-threonine degradation via oxydo-reductase pathway; glycine from L-threonine: step 1/2. Functionally, catalyzes the NAD(+)-dependent oxidation of L-threonine to 2-amino-3-ketobutyrate. This Shigella sonnei (strain Ss046) protein is L-threonine 3-dehydrogenase.